Here is an 896-residue protein sequence, read N- to C-terminus: Pentatricopeptide repeat-containing protein At5g03800 (896 aa).

PPR repeat units follow at residues 113–143, 144–178, 180–214, 215–247, 248–278, 284–318, 319–349, 350–380, 381–415, 416–450, 451–481, 484–519, 520–554, 555–585, 586–620, 621–653, and 659–689; these read KTRL…LSSP, TVVS…GLVQ, NEYT…GFLN, SVFV…IPQR, DVAS…MNRV, DSFT…GLMQ, ELSV…MMAQ, DAVT…VTEK, NTIT…GVEL, TDFS…GTAF, NPCI…WPSN, SSKA…KLFL, DEVS…GYFS, DISL…MREH, DVIS…EIKP, DIIT…MKTI, and TTEH…MPVQ. The type E motif stretch occupies residues 694 to 769; that stretch reads VLRALLDSCR…HPAKSWIIHE (76 aa). The interval 770–800 is type E(+) motif; the sequence is NKIHSFHARDTSHPQEKDIYRGLEILIMECL. The interval 801–896 is type DYW motif; sequence KVGYEPNTEY…NGKCSCRDLW (96 aa).

The protein belongs to the PPR family. PCMP-H subfamily.

Its function is as follows. May play a role in embryogenesis. The protein is Pentatricopeptide repeat-containing protein At5g03800 (EMB175) of Arabidopsis thaliana (Mouse-ear cress).